A 352-amino-acid polypeptide reads, in one-letter code: MAHTGTATLINAERTDRTLRLLETFPSLTITIRQDTSGRDLVSSVYSATGMSAAARNLNPIANVKNMRQPGYVKPAHTATNTVPLRVATSTGLELPTAHLAQMPVDQALRDAVAAAVPAHAARVLPPNVDRVTPLTLASRVAMVCAGLDCDDIHEIAPAPTAMALAFTTKVLLIHVVVDGTGASIAVNPGAARDLLKADQLGNVITNYGYDVRGTVRRDTAAALAPSELPDTYPIEWLGLICGLIATQIELDLDMLAMNQTEQKLIAPHVQAVDPFINRLQSYATLSSRLMHLCVTHAQRPFRDFPELLRHWQKPELTPAIPVNIALKGAALEVSGNGAELFRVRALPIGGM.

This sequence belongs to the aquareoviridae NS2 protein family. In terms of assembly, homomultimer.

Functionally, protein that binds to ssRNA and may be involved in genome packaging. This Aquareovirus C (isolate Golden shiner/USA/GSRV/1977) (AQRV-C) protein is Non-structural protein 2 (S9).